The sequence spans 303 residues: MDWTSYHDYDEINAWLDSLATDYPELASVEDVGLSYEGRTMKLLKLGKGGADKPIIFIDGGIHAREWIAPSTVTYIVNEFVSNSATYDDILSNVNFYVMPTINPDGYAYTFTDDRLWRKTRSETGSVLGCKGADPNRNWSFHWDEVGASDSPCSDIYAGPEPFSEVEMRNVRDQILEYAANIKVYLTFHSYSQLWMYPWGFTSDLPDDWQDLDTLATNAVDALTAVHGTRYEIGSSTNTIYAAAGGSDDWAKGEGGVKYAYTIELRDTGNYGFLLPENQIIPTGEETFEGVKVVANFVKDTYS.

In terms of domain architecture, Peptidase M14 spans 5–298 (SYHDYDEINA…EGVKVVANFV (294 aa)). Residues His-63 and Glu-66 each coordinate Zn(2+). Substrate contacts are provided by residues 63–66 (HARE), Arg-118, and 136–137 (NR). His-189 lines the Zn(2+) pocket. Substrate is bound by residues 190 to 191 (SY) and Tyr-241. The active-site Proton donor/acceptor is Glu-264.

It belongs to the peptidase M14 family. Requires Zn(2+) as cofactor.

The protein resides in the secreted. The catalysed reaction is Preferential release of a C-terminal lysine or arginine amino acid.. This chain is Carboxypeptidase B, found in Astacus astacus (Noble crayfish).